We begin with the raw amino-acid sequence, 92 residues long: Small ribosomal subunit protein uS17 (92 aa).

Belongs to the universal ribosomal protein uS17 family. In terms of assembly, part of the 30S ribosomal subunit.

One of the primary rRNA binding proteins, it binds specifically to the 5'-end of 16S ribosomal RNA. The sequence is that of Small ribosomal subunit protein uS17 from Corynebacterium urealyticum (strain ATCC 43042 / DSM 7109).